The chain runs to 332 residues: Biotin synthase (332 aa).

In terms of domain architecture, Radical SAM core spans 53–282 (YFGKKVKLNM…SKEIRISGGR (230 aa)). [4Fe-4S] cluster is bound by residues C71, C75, and C78. The [2Fe-2S] cluster site is built by C115, C147, C207, and R277.

The protein belongs to the radical SAM superfamily. Biotin synthase family. Homodimer. [4Fe-4S] cluster is required as a cofactor. [2Fe-2S] cluster serves as cofactor.

The catalysed reaction is (4R,5S)-dethiobiotin + (sulfur carrier)-SH + 2 reduced [2Fe-2S]-[ferredoxin] + 2 S-adenosyl-L-methionine = (sulfur carrier)-H + biotin + 2 5'-deoxyadenosine + 2 L-methionine + 2 oxidized [2Fe-2S]-[ferredoxin]. The protein operates within cofactor biosynthesis; biotin biosynthesis; biotin from 7,8-diaminononanoate: step 2/2. Catalyzes the conversion of dethiobiotin (DTB) to biotin by the insertion of a sulfur atom into dethiobiotin via a radical-based mechanism. The chain is Biotin synthase from Bacillus cytotoxicus (strain DSM 22905 / CIP 110041 / 391-98 / NVH 391-98).